The sequence spans 270 residues: S-adenosylmethionine decarboxylase proenzyme (270 aa).

Ser117 acts as the Schiff-base intermediate with substrate; via pyruvic acid in catalysis. Ser117 is subject to Pyruvic acid (Ser); by autocatalysis. The Proton acceptor; for processing activity role is filled by His122. Cys145 acts as the Proton donor; for catalytic activity in catalysis.

Belongs to the prokaryotic AdoMetDC family. Type 2 subfamily. As to quaternary structure, heterooctamer of four alpha and four beta chains arranged as a tetramer of alpha/beta heterodimers. Requires pyruvate as cofactor. Post-translationally, is synthesized initially as an inactive proenzyme. Formation of the active enzyme involves a self-maturation process in which the active site pyruvoyl group is generated from an internal serine residue via an autocatalytic post-translational modification. Two non-identical subunits are generated from the proenzyme in this reaction, and the pyruvate is formed at the N-terminus of the alpha chain, which is derived from the carboxyl end of the proenzyme. The post-translation cleavage follows an unusual pathway, termed non-hydrolytic serinolysis, in which the side chain hydroxyl group of the serine supplies its oxygen atom to form the C-terminus of the beta chain, while the remainder of the serine residue undergoes an oxidative deamination to produce ammonia and the pyruvoyl group blocking the N-terminus of the alpha chain.

The catalysed reaction is S-adenosyl-L-methionine + H(+) = S-adenosyl 3-(methylsulfanyl)propylamine + CO2. Its pathway is amine and polyamine biosynthesis; S-adenosylmethioninamine biosynthesis; S-adenosylmethioninamine from S-adenosyl-L-methionine: step 1/1. Catalyzes the decarboxylation of S-adenosylmethionine to S-adenosylmethioninamine (dcAdoMet), the propylamine donor required for the synthesis of the polyamines spermine and spermidine from the diamine putrescine. The chain is S-adenosylmethionine decarboxylase proenzyme from Pseudoalteromonas translucida (strain TAC 125).